Consider the following 200-residue polypeptide: Holliday junction branch migration complex subunit RuvA (200 aa).

The tract at residues 1-64 (MYAYFRGELI…EDLMQLYGFI (64 aa)) is domain I. The segment at 65-143 (EEEERQLFLL…KLQQTRPGKT (79 aa)) is domain II. Residues 144 to 154 (AGAGSVASLSE) are flexible linker. The tract at residues 154-200 (EDALQALMTLGFSRASAQQAVTRALLSAENPGVEDIVREALQNIRNH) is domain III.

Belongs to the RuvA family. In terms of assembly, homotetramer. Forms an RuvA(8)-RuvB(12)-Holliday junction (HJ) complex. HJ DNA is sandwiched between 2 RuvA tetramers; dsDNA enters through RuvA and exits via RuvB. An RuvB hexamer assembles on each DNA strand where it exits the tetramer. Each RuvB hexamer is contacted by two RuvA subunits (via domain III) on 2 adjacent RuvB subunits; this complex drives branch migration. In the full resolvosome a probable DNA-RuvA(4)-RuvB(12)-RuvC(2) complex forms which resolves the HJ.

It is found in the cytoplasm. In terms of biological role, the RuvA-RuvB-RuvC complex processes Holliday junction (HJ) DNA during genetic recombination and DNA repair, while the RuvA-RuvB complex plays an important role in the rescue of blocked DNA replication forks via replication fork reversal (RFR). RuvA specifically binds to HJ cruciform DNA, conferring on it an open structure. The RuvB hexamer acts as an ATP-dependent pump, pulling dsDNA into and through the RuvAB complex. HJ branch migration allows RuvC to scan DNA until it finds its consensus sequence, where it cleaves and resolves the cruciform DNA. In Prosthecochloris aestuarii (strain DSM 271 / SK 413), this protein is Holliday junction branch migration complex subunit RuvA.